A 254-amino-acid chain; its full sequence is Proteasome subunit alpha type-7 (254 aa).

An O-linked (GlcNAc) serine glycan is attached at Ser-136. Tyr-159 is modified (phosphotyrosine). N6-acetyllysine is present on Lys-233.

The protein belongs to the peptidase T1A family. As to quaternary structure, the 26S proteasome consists of a 20S proteasome core and two 19S regulatory subunits. The 20S proteasome core is a barrel-shaped complex made of 28 subunits that are arranged in four stacked rings. The two outer rings are each formed by seven alpha subunits, and the two inner rings are formed by seven beta subunits. The proteolytic activity is exerted by three beta-subunits PSMB5, PSMB6 and PSMB7. PSMA7 interacts directly with the PSMG1-PSMG2 heterodimer which promotes 20S proteasome assembly. Interacts with HIF1A. Interacts with RAB7A. Interacts with PRKN. Interacts with ABL1 and ABL2. Interacts with EMAP2. Interacts with MAVS. As to expression, ubiquitous.

Its subcellular location is the cytoplasm. The protein resides in the nucleus. In terms of biological role, component of the 20S core proteasome complex involved in the proteolytic degradation of most intracellular proteins. This complex plays numerous essential roles within the cell by associating with different regulatory particles. Associated with two 19S regulatory particles, forms the 26S proteasome and thus participates in the ATP-dependent degradation of ubiquitinated proteins. The 26S proteasome plays a key role in the maintenance of protein homeostasis by removing misfolded or damaged proteins that could impair cellular functions, and by removing proteins whose functions are no longer required. Associated with the PA200 or PA28, the 20S proteasome mediates ubiquitin-independent protein degradation. This type of proteolysis is required in several pathways including spermatogenesis (20S-PA200 complex) or generation of a subset of MHC class I-presented antigenic peptides (20S-PA28 complex). Inhibits the transactivation function of HIF-1A under both normoxic and hypoxia-mimicking conditions. The interaction with EMAP2 increases the proteasome-mediated HIF-1A degradation under the hypoxic conditions. Plays a role in hepatitis C virus internal ribosome entry site-mediated translation. Mediates nuclear translocation of the androgen receptor (AR) and thereby enhances androgen-mediated transactivation. Promotes MAVS degradation and thereby negatively regulates MAVS-mediated innate immune response. This chain is Proteasome subunit alpha type-7 (Psma7), found in Rattus norvegicus (Rat).